The primary structure comprises 521 residues: Bifunctional purine biosynthesis protein PurH (521 aa).

The region spanning 1–145 is the MGS-like domain; sequence MIKQALISVS…KNHRDVTVVV (145 aa).

This sequence belongs to the PurH family.

It catalyses the reaction (6R)-10-formyltetrahydrofolate + 5-amino-1-(5-phospho-beta-D-ribosyl)imidazole-4-carboxamide = 5-formamido-1-(5-phospho-D-ribosyl)imidazole-4-carboxamide + (6S)-5,6,7,8-tetrahydrofolate. It carries out the reaction IMP + H2O = 5-formamido-1-(5-phospho-D-ribosyl)imidazole-4-carboxamide. It participates in purine metabolism; IMP biosynthesis via de novo pathway; 5-formamido-1-(5-phospho-D-ribosyl)imidazole-4-carboxamide from 5-amino-1-(5-phospho-D-ribosyl)imidazole-4-carboxamide (10-formyl THF route): step 1/1. It functions in the pathway purine metabolism; IMP biosynthesis via de novo pathway; IMP from 5-formamido-1-(5-phospho-D-ribosyl)imidazole-4-carboxamide: step 1/1. The polypeptide is Bifunctional purine biosynthesis protein PurH (Burkholderia orbicola (strain MC0-3)).